The primary structure comprises 202 residues: Dephospho-CoA kinase (202 aa).

The DPCK domain occupies V4–Q200. G12 to A17 is an ATP binding site.

The protein belongs to the CoaE family.

It localises to the cytoplasm. It carries out the reaction 3'-dephospho-CoA + ATP = ADP + CoA + H(+). It participates in cofactor biosynthesis; coenzyme A biosynthesis; CoA from (R)-pantothenate: step 5/5. Functionally, catalyzes the phosphorylation of the 3'-hydroxyl group of dephosphocoenzyme A to form coenzyme A. The polypeptide is Dephospho-CoA kinase (Idiomarina loihiensis (strain ATCC BAA-735 / DSM 15497 / L2-TR)).